The following is a 253-amino-acid chain: NAC transcription factor 32 (253 aa).

The 151-residue stretch at 10–160 (FPPGFRFHPT…DWVLCRIYNK (151 aa)) folds into the NAC domain. A DNA-binding region spans residues 106-166 (VGIKKALVFY…IYNKKGVIEK (61 aa)).

As to expression, expressed in germinating seeds, roots, leaf veins, open flowers and silique stalks.

The protein localises to the nucleus. Transcriptional activator that positively regulates age-dependent senescence, dark-induced leaf senescence and stress-induced senescence. Regulates leaf senescence through the modulation of the expression of senescence-associated genes SGR1/NYE1, SAG113 and SAUR36/SAG201, which are involved in chlorophyll degradation, and abscisic acid (ABA) and auxin promotion of senescence, respectively. Promotes reactive oxygen species (ROS) production during age-dependent and stress-induced senescence. Positively regulates auxin-mediated responses in roots. Stress-responsive NAC transcription factor involved in ABA-inducible leaf senescence signaling. Required for normal seed development and morphology. The sequence is that of NAC transcription factor 32 from Arabidopsis thaliana (Mouse-ear cress).